A 254-amino-acid chain; its full sequence is Indole-3-glycerol phosphate synthase (254 aa).

This sequence belongs to the TrpC family.

It carries out the reaction 1-(2-carboxyphenylamino)-1-deoxy-D-ribulose 5-phosphate + H(+) = (1S,2R)-1-C-(indol-3-yl)glycerol 3-phosphate + CO2 + H2O. It participates in amino-acid biosynthesis; L-tryptophan biosynthesis; L-tryptophan from chorismate: step 4/5. In Methanopyrus kandleri (strain AV19 / DSM 6324 / JCM 9639 / NBRC 100938), this protein is Indole-3-glycerol phosphate synthase.